The sequence spans 773 residues: Lon protease homolog 2, peroxisomal (773 aa).

Positions 9-198 (LPVILVTSGV…MCIKWMNEKK (190 aa)) constitute a Lon N-terminal domain. An ATP-binding site is contributed by 336-343 (GPPGIGKT). The Lon proteolytic domain occupies 587–766 (PLPAGVCFGL…EDVIGAMMDK (180 aa)). Catalysis depends on residues Ser-672 and Lys-715. The Microbody targeting signal motif lies at 771-773 (AKL).

Belongs to the peptidase S16 family.

The protein localises to the peroxisome matrix. The catalysed reaction is Hydrolysis of proteins in presence of ATP.. ATP-dependent serine protease that mediates the selective degradation of misfolded and unassembled polypeptides in the peroxisomal matrix. Necessary for type 2 peroxisome targeting signal (PTS2)-containing protein processing and facilitates peroxisome matrix protein import. The chain is Lon protease homolog 2, peroxisomal from Caenorhabditis elegans.